The chain runs to 380 residues: ATPase ASNA1 homolog (380 aa).

48 to 55 (KGGVGKTT) is an ATP binding site. D77 is an active-site residue. ATP-binding residues include E248 and N275.

The protein belongs to the arsA ATPase family. Homodimer.

It is found in the cytoplasm. It localises to the endoplasmic reticulum. Functionally, ATPase required for the post-translational delivery of tail-anchored (TA) proteins to the endoplasmic reticulum. Recognizes and selectively binds the transmembrane domain of TA proteins in the cytosol. This complex then targets to the endoplasmic reticulum by membrane-bound receptors, where the tail-anchored protein is released for insertion. This process is regulated by ATP binding and hydrolysis. ATP binding drives the homodimer towards the closed dimer state, facilitating recognition of newly synthesized TA membrane proteins. ATP hydrolysis is required for insertion. Subsequently, the homodimer reverts towards the open dimer state, lowering its affinity for the membrane-bound receptor, and returning it to the cytosol to initiate a new round of targeting. The chain is ATPase ASNA1 homolog from Plasmodium chabaudi chabaudi.